Consider the following 285-residue polypeptide: Pantothenate synthetase (285 aa).

ATP is bound at residue 30–37 (MGFLHEGH). The Proton donor role is filled by histidine 37. Glutamine 61 serves as a coordination point for (R)-pantoate. Beta-alanine is bound at residue glutamine 61. 147–150 (GQKD) provides a ligand contact to ATP. Glutamine 153 contacts (R)-pantoate. ATP contacts are provided by residues valine 176 and 184–187 (KSSR).

Belongs to the pantothenate synthetase family. Homodimer.

The protein resides in the cytoplasm. It catalyses the reaction (R)-pantoate + beta-alanine + ATP = (R)-pantothenate + AMP + diphosphate + H(+). It functions in the pathway cofactor biosynthesis; (R)-pantothenate biosynthesis; (R)-pantothenate from (R)-pantoate and beta-alanine: step 1/1. Catalyzes the condensation of pantoate with beta-alanine in an ATP-dependent reaction via a pantoyl-adenylate intermediate. This chain is Pantothenate synthetase, found in Listeria innocua serovar 6a (strain ATCC BAA-680 / CLIP 11262).